Consider the following 285-residue polypeptide: Chromatin modification-related protein YNG2 (285 aa).

Disordered stretches follow at residues 1–24 and 155–201; these read MSFERPQDPSSALEQATQDVSNLK and RTVA…GANF. Residues 8 to 24 are compositionally biased toward polar residues; it reads DPSSALEQATQDVSNLK. A coiled-coil region spans residues 10 to 36; sequence SSALEQATQDVSNLKSESRFLLEEIRA. The PHD-type zinc finger occupies 224–273; the sequence is QLYCFCQSVSYGEMVACDGPNCKYEWFHYGCVNLDEPPKGQWYCPECRQE. Cys227, Cys229, Cys240, Cys245, His251, Cys254, Cys267, and Cys270 together coordinate Zn(2+).

Belongs to the ING family. In terms of assembly, interacts with H3K4me3 and to a lesser extent with H3K4me2. Component of the NuA4 histone acetyltransferase complex.

It is found in the nucleus. Functionally, component of the NuA4 histone acetyltransferase complex which is involved in transcriptional activation of selected genes principally by acetylation of nucleosomal histone H4 and H2A. The NuA4 complex is also involved in DNA repair. Involved in cell cycle progression and meiosis. The polypeptide is Chromatin modification-related protein YNG2 (YNG2) (Eremothecium gossypii (strain ATCC 10895 / CBS 109.51 / FGSC 9923 / NRRL Y-1056) (Yeast)).